Reading from the N-terminus, the 567-residue chain is MKTISRQAYADMFGPTTGDRLRLADTELFLEIEQDFTTYGEEVKFGGGKVIRDGMGQSQVVSAECVDVLITNAIIIDHWGIVKADIGIKDGRITGIGKAGNPDVQPNVDIVIGPGTEVVAGEGKIITAGGVDTHIHFICPQQAEEGLISGVTTFIGGGTGPVAGTNATTVTPGIWNMHRMLEAVDELPINVGLFGKGCVSQPEAIREQIEAGAIGLKIHEDWGATPMAIHNCLNVADEMDVQVAIHSDTLNEGGFYEETVKAIAGRVIHVFHTEGAGGGHAPDVIKSVGEPNILPASTNPTMPYTINTVDEHLDMLMVCHHLDPSIPEDVAFAESRIRRETIAAEDILHDMGAISVMSSDSQAMGRVGEVVMRTWQCAHKMKLQRGSLAGDTAENDNNRIKRYIAKYTINPALAHGIAHEVGSIEKGKLADIVLWDPAFFGVKPALIMKGGMVAYAPMGDINAAIPTPQPVHYRPMYACLGKAKYQTSMIFMSKAGIDAGVPEKLGLQSLIGRVEGCRKVTKASMIHNSYVPHIELEPQTYIVKADGVPLVCEPATELPMAQRYFLF.

In terms of domain architecture, Urease spans 129-567 (GGVDTHIHFI…LPMAQRYFLF (439 aa)). 3 residues coordinate Ni(2+): His134, His136, and Lys217. An N6-carboxylysine modification is found at Lys217. His219 lines the substrate pocket. 2 residues coordinate Ni(2+): His246 and His272. Catalysis depends on His320, which acts as the Proton donor. Asp360 is a Ni(2+) binding site.

Belongs to the metallo-dependent hydrolases superfamily. Urease alpha subunit family. Heterotrimer of UreA (gamma), UreB (beta) and UreC (alpha) subunits. Three heterotrimers associate to form the active enzyme. Requires Ni cation as cofactor. In terms of processing, carboxylation allows a single lysine to coordinate two nickel ions.

It is found in the cytoplasm. The enzyme catalyses urea + 2 H2O + H(+) = hydrogencarbonate + 2 NH4(+). It functions in the pathway nitrogen metabolism; urea degradation; CO(2) and NH(3) from urea (urease route): step 1/1. The chain is Urease subunit alpha from Proteus hauseri.